The chain runs to 207 residues: Claudin-11 (207 aa).

Residue Met1 is a topological domain, cytoplasmic. Residues 2–22 (VATCLQVVGFVTSFVGWIGVI) form a helical membrane-spanning segment. At 23 to 82 (VTTSTNDWVVTCGYTIPTCRKLDELGSKGLWADCVMATGLYHCKPLVDILILPGYVQACR) the chain is on the extracellular side. Residues 83–103 (ALMIAASVLGLPAILLLLTVL) traverse the membrane as a helical segment. Residues 104–122 (PCIRMGQEPGVAKYRRAQL) lie on the Cytoplasmic side of the membrane. Residues 123–143 (AGVLLILLALCALVATIWFPV) form a helical membrane-spanning segment. The Extracellular portion of the chain corresponds to 144–157 (CAHRETTIVSFGYS). A helical membrane pass occupies residues 158–178 (LYAGWIGAVLCLVGGCVILCC). Residues 179-207 (AGDAQAFGENRFYYTAGSSSPTHAKSAHV) lie on the Cytoplasmic side of the membrane. Residues Ser197 and Ser198 each carry the phosphoserine modification.

It belongs to the claudin family. As to quaternary structure, interacts with tetraspanin-3/TSPAN3. Interacts with OCLN.

Its subcellular location is the cell junction. The protein resides in the tight junction. The protein localises to the cell membrane. Functionally, plays a major role in tight junction-specific obliteration of the intercellular space, through calcium-independent cell-adhesion activity. This chain is Claudin-11 (CLDN11), found in Homo sapiens (Human).